Reading from the N-terminus, the 155-residue chain is MSQEQVVTELLRPIVESMGFIWWGLEYHYNSMNSILRIYVDTQEGGIGIDDIVTITEQLNPILDVEQPITTNYTLEVSSPGLDRILFTLAQCEQFIGATVHCRLRFPFEGKRKFQGIMTAVDHDKETISLTLADGAAEVHLPFTQIDKARIVPQF.

The protein belongs to the RimP family.

It is found in the cytoplasm. Its function is as follows. Required for maturation of 30S ribosomal subunits. The polypeptide is Ribosome maturation factor RimP (Dichelobacter nodosus (strain VCS1703A)).